Here is a 39-residue protein sequence, read N- to C-terminus: Photosystem II reaction center protein X (39 aa).

A helical transmembrane segment spans residues 10 to 30; sequence WSLLWGTAIVVIPVTVGLIFI.

The protein belongs to the PsbX family. Type 1 subfamily. In terms of assembly, PSII is composed of 1 copy each of membrane proteins PsbA, PsbB, PsbC, PsbD, PsbE, PsbF, PsbH, PsbI, PsbJ, PsbK, PsbL, PsbM, PsbT, PsbX, PsbY, PsbZ, Psb30/Ycf12, peripheral proteins PsbO, CyanoQ (PsbQ), PsbU, PsbV and a large number of cofactors. It forms dimeric complexes.

Its subcellular location is the cellular thylakoid membrane. Functionally, involved in the binding and/or turnover of quinones at the Q(B) site of photosystem II (PSII). PSII is a light-driven water plastoquinone oxidoreductase, using light energy to abstract electrons from H(2)O, generating a proton gradient subsequently used for ATP formation. The protein is Photosystem II reaction center protein X of Nostoc punctiforme (strain ATCC 29133 / PCC 73102).